We begin with the raw amino-acid sequence, 127 residues long: Large ribosomal subunit protein bL12 (127 aa).

Residues 96–127 form a disordered region; sequence GTPSTLKEAVSKDDAEEAAKQLKEAGAEVEVK. Positions 104 to 127 are enriched in basic and acidic residues; sequence AVSKDDAEEAAKQLKEAGAEVEVK.

The protein belongs to the bacterial ribosomal protein bL12 family. Homodimer. Part of the ribosomal stalk of the 50S ribosomal subunit. Forms a multimeric L10(L12)X complex, where L10 forms an elongated spine to which 2 to 4 L12 dimers bind in a sequential fashion. Binds GTP-bound translation factors.

Forms part of the ribosomal stalk which helps the ribosome interact with GTP-bound translation factors. Is thus essential for accurate translation. The polypeptide is Large ribosomal subunit protein bL12 (Oleidesulfovibrio alaskensis (strain ATCC BAA-1058 / DSM 17464 / G20) (Desulfovibrio alaskensis)).